The following is a 347-amino-acid chain: NADH-ubiquinone oxidoreductase chain 2 (347 aa).

Helical transmembrane passes span 1 to 21 (MNPA…MIVT), 25 to 45 (HWLT…PILM), 59 to 79 (YFLT…INLV), 96 to 116 (ITMT…FWVP), 127 to 147 (GLIL…QISP), 149 to 169 (INLE…GWGG), 178 to 198 (IMAY…AYNP), 201 to 221 (TLLN…MLML), 240 to 260 (LATT…LSGF), 274 to 294 (DSII…YFYM), and 326 to 346 (ISPL…LTLL).

It belongs to the complex I subunit 2 family. Core subunit of respiratory chain NADH dehydrogenase (Complex I) which is composed of 45 different subunits. Interacts with TMEM242.

Its subcellular location is the mitochondrion inner membrane. It carries out the reaction a ubiquinone + NADH + 5 H(+)(in) = a ubiquinol + NAD(+) + 4 H(+)(out). Functionally, core subunit of the mitochondrial membrane respiratory chain NADH dehydrogenase (Complex I) which catalyzes electron transfer from NADH through the respiratory chain, using ubiquinone as an electron acceptor. Essential for the catalytic activity and assembly of complex I. The protein is NADH-ubiquinone oxidoreductase chain 2 of Dobsonia minor (Lesser bare-backed fruit bat).